The following is a 258-amino-acid chain: UPF0246 protein Asuc_0575 (258 aa).

Belongs to the UPF0246 family.

This Actinobacillus succinogenes (strain ATCC 55618 / DSM 22257 / CCUG 43843 / 130Z) protein is UPF0246 protein Asuc_0575.